Here is a 309-residue protein sequence, read N- to C-terminus: Ribosomal RNA small subunit methyltransferase H (309 aa).

Residues 33 to 35 (GGH), aspartate 53, phenylalanine 79, aspartate 100, and glutamine 107 contribute to the S-adenosyl-L-methionine site.

It belongs to the methyltransferase superfamily. RsmH family.

It is found in the cytoplasm. It catalyses the reaction cytidine(1402) in 16S rRNA + S-adenosyl-L-methionine = N(4)-methylcytidine(1402) in 16S rRNA + S-adenosyl-L-homocysteine + H(+). Its function is as follows. Specifically methylates the N4 position of cytidine in position 1402 (C1402) of 16S rRNA. This is Ribosomal RNA small subunit methyltransferase H from Clostridium botulinum (strain 657 / Type Ba4).